The following is a 436-amino-acid chain: Histidinol dehydrogenase (436 aa).

Residues Y130, Q191, and N214 each coordinate NAD(+). Residues S237, Q259, and H262 each contribute to the substrate site. Q259 and H262 together coordinate Zn(2+). Catalysis depends on proton acceptor residues E327 and H328. Positions 328, 361, 415, and 420 each coordinate substrate. Residue D361 coordinates Zn(2+). H420 lines the Zn(2+) pocket.

The protein belongs to the histidinol dehydrogenase family. It depends on Zn(2+) as a cofactor.

It catalyses the reaction L-histidinol + 2 NAD(+) + H2O = L-histidine + 2 NADH + 3 H(+). It participates in amino-acid biosynthesis; L-histidine biosynthesis; L-histidine from 5-phospho-alpha-D-ribose 1-diphosphate: step 9/9. In terms of biological role, catalyzes the sequential NAD-dependent oxidations of L-histidinol to L-histidinaldehyde and then to L-histidine. The polypeptide is Histidinol dehydrogenase (Geobacter metallireducens (strain ATCC 53774 / DSM 7210 / GS-15)).